A 350-amino-acid chain; its full sequence is Serine-threonine kinase receptor-associated protein (350 aa).

WD repeat units follow at residues G12–L56, G57–T96, A98–K137, G141–S179, L180–V212, E221–K262, and G263–L302. S312, S335, and S338 each carry phosphoserine.

The protein belongs to the WD repeat STRAP family. In terms of assembly, part of the core SMN complex that contains SMN1, GEMIN2/SIP1, DDX20/GEMIN3, GEMIN4, GEMIN5, GEMIN6, GEMIN7, GEMIN8 and STRAP/UNRIP. Part of the SMN-Sm complex that contains SMN1, GEMIN2/SIP1, DDX20/GEMIN3, GEMIN4, GEMIN5, GEMIN6, GEMIN7, GEMIN8, STRAP/UNRIP and the Sm proteins SNRPB, SNRPD1, SNRPD2, SNRPD3, SNRPE, SNRPF and SNRPG. Associates with the SMN complex in the cytoplasm but not in the nucleus. Interacts with GEMIN6; the interaction is direct. Interacts with GEMIN7; the interaction is direct. Interacts with CSDE1/UNR and MAWBP. Interacts with PDPK1. Interacts with TRIM48.

Its subcellular location is the cytoplasm. It is found in the nucleus. Its function is as follows. The SMN complex catalyzes the assembly of small nuclear ribonucleoproteins (snRNPs), the building blocks of the spliceosome, and thereby plays an important role in the splicing of cellular pre-mRNAs. Most spliceosomal snRNPs contain a common set of Sm proteins SNRPB, SNRPD1, SNRPD2, SNRPD3, SNRPE, SNRPF and SNRPG that assemble in a heptameric protein ring on the Sm site of the small nuclear RNA to form the core snRNP (Sm core). In the cytosol, the Sm proteins SNRPD1, SNRPD2, SNRPE, SNRPF and SNRPG are trapped in an inactive 6S pICln-Sm complex by the chaperone CLNS1A that controls the assembly of the core snRNP. To assemble core snRNPs, the SMN complex accepts the trapped 5Sm proteins from CLNS1A forming an intermediate. Binding of snRNA inside 5Sm triggers eviction of the SMN complex, thereby allowing binding of SNRPD3 and SNRPB to complete assembly of the core snRNP. STRAP plays a role in the cellular distribution of the SMN complex. Negatively regulates TGF-beta signaling but positively regulates the PDPK1 kinase activity by enhancing its autophosphorylation and by significantly reducing the association of PDPK1 with 14-3-3 protein. This Homo sapiens (Human) protein is Serine-threonine kinase receptor-associated protein (STRAP).